Reading from the N-terminus, the 1290-residue chain is Nonribosomal peptide synthetase 6 (1290 aa).

The disordered stretch occupies residues 1–27; sequence MTAIDVPWLSTPRRDNSHGTRSNSSCQ. The adenylation stretch occupies residues 260–657; sequence SYQELDCQAS…AQVEHHLRSC (398 aa). Residues 775-851 form the Carrier domain; the sequence is APETELERKL…GLAQTHRHPV (77 aa). Ser-812 carries the post-translational modification O-(pantetheine 4'-phosphoryl)serine. The tract at residues 846 to 870 is disordered; that stretch reads THRHPVRRAEVPRSSHDPDPFGRVR. Basic and acidic residues predominate over residues 852-870; the sequence is RRAEVPRSSHDPDPFGRVR. The interval 914-1162 is condensation; that stretch reads GGQLDPEQLR…PCMNIIPVRV (249 aa).

Belongs to the NRP synthetase family.

Its function is as follows. Nonribosomal peptide synthesis (NRPS) is a key mechanism responsible for the biosynthesis of bioactive metabolites which are potentially contributing to organismal virulence. This chain is Nonribosomal peptide synthetase 6 (NRPS6), found in Aspergillus fumigatus (strain ATCC MYA-4609 / CBS 101355 / FGSC A1100 / Af293) (Neosartorya fumigata).